A 577-amino-acid polypeptide reads, in one-letter code: 2-succinyl-5-enolpyruvyl-6-hydroxy-3-cyclohexene-1-carboxylate synthase (577 aa).

The protein belongs to the TPP enzyme family. MenD subfamily. As to quaternary structure, homodimer. Mg(2+) is required as a cofactor. It depends on Mn(2+) as a cofactor. Thiamine diphosphate serves as cofactor.

The enzyme catalyses isochorismate + 2-oxoglutarate + H(+) = 5-enolpyruvoyl-6-hydroxy-2-succinyl-cyclohex-3-ene-1-carboxylate + CO2. The protein operates within quinol/quinone metabolism; 1,4-dihydroxy-2-naphthoate biosynthesis; 1,4-dihydroxy-2-naphthoate from chorismate: step 2/7. It functions in the pathway quinol/quinone metabolism; menaquinone biosynthesis. Its function is as follows. Catalyzes the thiamine diphosphate-dependent decarboxylation of 2-oxoglutarate and the subsequent addition of the resulting succinic semialdehyde-thiamine pyrophosphate anion to isochorismate to yield 2-succinyl-5-enolpyruvyl-6-hydroxy-3-cyclohexene-1-carboxylate (SEPHCHC). This Christiangramia forsetii (strain DSM 17595 / CGMCC 1.15422 / KT0803) (Gramella forsetii) protein is 2-succinyl-5-enolpyruvyl-6-hydroxy-3-cyclohexene-1-carboxylate synthase.